A 96-amino-acid polypeptide reads, in one-letter code: Non-specific lipid-transfer protein 2 (96 aa).

The first 27 residues, 1-27 (MMRKLAVLVLAVAMVAACGGGVVGVAG), serve as a signal peptide directing secretion. Cystine bridges form between Cys-30–Cys-62, Cys-38–Cys-52, Cys-53–Cys-88, and Cys-64–Cys-95.

In terms of biological role, transfer lipids across membranes. May play a role in plant defense or in the biosynthesis of cuticle layers. The polypeptide is Non-specific lipid-transfer protein 2 (LTP-2) (Oryza sativa subsp. japonica (Rice)).